A 61-amino-acid polypeptide reads, in one-letter code: Bactericidin B-5P (61 aa).

Residues 1–22 (MNFSRVLFFVFACLSAFAMASA) form the signal peptide. Residues 23–24 (AP) constitute a propeptide, removed by a dipeptidylpeptidase. At Gly-60 the chain carries Glycine amide.

The protein belongs to the cecropin family.

Its subcellular location is the secreted. Cecropins have lytic and antibacterial activity against several Gram-positive and Gram-negative bacteria. The polypeptide is Bactericidin B-5P (Manduca sexta (Tobacco hawkmoth)).